We begin with the raw amino-acid sequence, 277 residues long: Phosphatidylglycerol--prolipoprotein diacylglyceryl transferase (277 aa).

4 consecutive transmembrane segments (helical) span residues 18 to 38 (ISVK…LLLA), 51 to 71 (IIVD…RIYY), 89 to 109 (IWHG…TAII), and 116 to 136 (ISFW…QAIG). Residue Arg137 participates in a 1,2-diacyl-sn-glycero-3-phospho-(1'-sn-glycerol) binding. Helical transmembrane passes span 177–197 (QPTF…LLII), 205–225 (GELF…IEGM), and 235–255 (FRVS…IIIY).

This sequence belongs to the Lgt family.

It is found in the cell membrane. The catalysed reaction is L-cysteinyl-[prolipoprotein] + a 1,2-diacyl-sn-glycero-3-phospho-(1'-sn-glycerol) = an S-1,2-diacyl-sn-glyceryl-L-cysteinyl-[prolipoprotein] + sn-glycerol 1-phosphate + H(+). It participates in protein modification; lipoprotein biosynthesis (diacylglyceryl transfer). Functionally, catalyzes the transfer of the diacylglyceryl group from phosphatidylglycerol to the sulfhydryl group of the N-terminal cysteine of a prolipoprotein, the first step in the formation of mature lipoproteins. In Listeria monocytogenes serotype 4a (strain HCC23), this protein is Phosphatidylglycerol--prolipoprotein diacylglyceryl transferase.